Consider the following 146-residue polypeptide: Probable calcium-binding protein CML40 (146 aa).

One can recognise an EF-hand 1 domain in the interval 7-42 (NKRDEYQRVFSCFDKSHQGKVSVSTIERCVDAIKSG). Residues 44 to 65 (RAVVDQEDTTNPNPEESTDDKS) form a disordered region. In terms of domain architecture, EF-hand 2 spans 116–146 (KSLKDCEVMISQFDINRDGIINFDEFRAMMQ). Positions 129, 131, 133, and 140 each coordinate Ca(2+).

In terms of biological role, potential calcium sensor. This Arabidopsis thaliana (Mouse-ear cress) protein is Probable calcium-binding protein CML40 (CML40).